We begin with the raw amino-acid sequence, 699 residues long: UV radiation resistance-associated gene protein (699 aa).

Residues 1 to 10 (MSASASVGGP) show a composition bias toward low complexity. The interval 1–24 (MSASASVGGPVPQPPPGPAAALPP) is disordered. In terms of domain architecture, C2 spans 23–149 (PPGSAARALH…YLGQQIHARN (127 aa)). The segment at 200-269 (HRAQCAIKQT…REVALLHKQQ (70 aa)) is sufficient for interaction with STX7; VTI1B AND STX8. Positions 224–305 (LRLTSTSNEL…LRKECTAKRE (82 aa)) form a coiled coil. The segment at 270–442 (IALQDKGSAF…IAQLRYQHGL (173 aa)) is sufficient for interaction with VPS16, required for interaction with CEP63. The required for interaction with PRKDC, XRCC6 and XRCC5 stretch occupies residues 443–699 (GTPDLRQTLP…FRRPRRSSDK (257 aa)). Residues 486–591 (GGADVGFSGG…SQEQGEALSG (106 aa)) form a disordered region. Ser493 carries the post-translational modification Phosphoserine. At Ser498 the chain carries Phosphoserine; by MTOR. Ser508 bears the Phosphoserine mark. Phosphothreonine is present on Thr518. Position 522 is a phosphoserine (Ser522). The span at 523 to 535 (YNSALAQPVTTVP) shows a compositional bias: polar residues. The span at 545 to 556 (TSLSSSLDTSLD) shows a compositional bias: low complexity. Phosphoserine occurs at positions 549 and 550. Over residues 557 to 567 (FSKENKKKGED) the composition is skewed to basic and acidic residues. Residues Ser571, Ser582, and Ser689 each carry the phosphoserine modification.

Component of the PI3K (PI3KC3/PI3K-III/class III phosphatidylinositol 3-kinase) complex II (PI3KC3-C2) in which the core composed of the catalytic subunit PIK3C3, the regulatory subunit PIK3R4 and BECN1 is associated with UVRAG; in the complex interacts directly with BECN1. PI3KC3-C2 can associate with further regulatory subunits such as RUBCN and probably SH3GLB1/Bif-1. Interacts with SH3GLB1; UVRAG bridges the interaction to BECN1 indicative for an association with the PI3K complex PI3KC3-C2. Interacts with RINT1. Associates with the NRZ complex under basal conditions and dissociates from it under autophagy conditions to associate with the PI3K complex; these complex associations seem to be mutually exclusive. Interacts with VPS16; VPS11; VPS18; VPS33 (VPS33A or VPS33B) and VPS39; indicative for an association with a class C Vps tethering complex (possibly the HOPS complex). Interacts with RAB7A; RAB7A competes with UVRAG for RUBCN binding. Interacts with STX7, VTI1B, STX8. Interacts with PRKDC, XRCC6 and XRCC5; indicative for an association with the DNA-dependent protein kinase complex DNA-PK. Interacts with CEP63. Directly interacts with FEZ1 and SCOC; the interaction with SCOC is reduced by amino acid starvation, but the complex is stabilized in the presence of FEZ1. Interacts with BECN1P1/BECN2. Interacts with SLAMF1. Interacts with RUBCNL/PACER; promoting targeting of UVRAG to autophagosome. Interacts with WNK1. Phosphorylated at Ser-498 by MTOR under basal conditions; increases the interaction with RUBCN implicated in inhibitory effect of RUBCN on PI3KC3 and decreases interaction with RAB7,A and VPS16 and VPS39 (indicative for a class C Vps complex, possibly the HOPS complex). In terms of tissue distribution, highly expressed in brain, lung, kidney and liver.

The protein resides in the late endosome. It localises to the lysosome. The protein localises to the cytoplasmic vesicle. It is found in the autophagosome. Its subcellular location is the early endosome. The protein resides in the endoplasmic reticulum. It localises to the midbody. The protein localises to the chromosome. It is found in the centromere. Versatile protein that is involved in regulation of different cellular pathways implicated in membrane trafficking. Involved in regulation of the COPI-dependent retrograde transport from Golgi and the endoplasmic reticulum by associating with the NRZ complex; the function is dependent on its binding to phosphatidylinositol 3-phosphate (PtdIns(3)P). During autophagy acts as a regulatory subunit of the alternative PI3K complex II (PI3KC3-C2) that mediates formation of phosphatidylinositol 3-phosphate and is believed to be involved in maturation of autophagosomes and endocytosis. Activates lipid kinase activity of PIK3C3. Involved in the regulation of degradative endocytic trafficking and cytokinesis, and in regulation of ATG9A transport from the Golgi to the autophagosome; the functions seems to implicate its association with PI3KC3-C2. Involved in maturation of autophagosomes and degradative endocytic trafficking independently of BECN1 but depending on its association with a class C Vps complex (possibly the HOPS complex); the association is also proposed to promote autophagosome recruitment and activation of Rab7 and endosome-endosome fusion events. Enhances class C Vps complex (possibly HOPS complex) association with a SNARE complex and promotes fusogenic SNARE complex formation during late endocytic membrane fusion. In case of negative-strand RNA virus infection is required for efficient virus entry, promotes endocytic transport of virions and is implicated in a VAMP8-specific fusogenic SNARE complex assembly. Its function is as follows. Involved in maintaining chromosomal stability. Promotes DNA double-strand break (DSB) repair by association with DNA-dependent protein kinase complex DNA-PK and activating it in non-homologous end joining (NHEJ). Required for centrosome stability and proper chromosome segregation. In Homo sapiens (Human), this protein is UV radiation resistance-associated gene protein (UVRAG).